Reading from the N-terminus, the 614-residue chain is uncharacterized protein (614 aa).

2 helical membrane passes run 494–516 and 552–574; these read VAYW…GSTL and LLIG…IVHA. The tract at residues 588 to 614 is disordered; that stretch reads AVRPRADKDIQTLTHRDEAEEDQEEDS. Basic and acidic residues predominate over residues 591–605; the sequence is PRADKDIQTLTHRDE.

It is found in the cell membrane. This is an uncharacterized protein from Treponema pallidum (strain Nichols).